The following is a 254-amino-acid chain: 5-oxoprolinase subunit A (254 aa).

It belongs to the LamB/PxpA family. In terms of assembly, forms a complex composed of PxpA, PxpB and PxpC.

The catalysed reaction is 5-oxo-L-proline + ATP + 2 H2O = L-glutamate + ADP + phosphate + H(+). Its function is as follows. Catalyzes the cleavage of 5-oxoproline to form L-glutamate coupled to the hydrolysis of ATP to ADP and inorganic phosphate. The polypeptide is 5-oxoprolinase subunit A (Acinetobacter baumannii (strain ATCC 17978 / DSM 105126 / CIP 53.77 / LMG 1025 / NCDC KC755 / 5377)).